The chain runs to 335 residues: Mitochondrial amidoxime reducing component 2 (335 aa).

A mitochondrion-targeting transit peptide spans 1–35 (MGASSSSALARLGLPARPWPRWLGVAALGLAAVAL). Residues Lys59, Lys138, and Lys144 each participate in a glycyl lysine isopeptide (Lys-Gly) (interchain with G-Cter in ubiquitin) cross-link. The residue at position 156 (Lys156) is an N6-acetyllysine; alternate. A Glycyl lysine isopeptide (Lys-Gly) (interchain with G-Cter in ubiquitin); alternate cross-link involves residue Lys156. Residues Lys166, Lys173, Lys187, Lys287, and Lys294 each participate in a glycyl lysine isopeptide (Lys-Gly) (interchain with G-Cter in ubiquitin) cross-link. One can recognise an MOSC domain in the interval 188–334 (GRTSRKLLPT…LRVGDPVYRM (147 aa)).

As to quaternary structure, component of a complex composed of cytochrome b5, NADH-cytochrome b5 reductase (CYB5R3) and MTARC2. The cofactor is Mo-molybdopterin. In terms of processing, ubiquitinated by PRKN during mitophagy, leading to its degradation and enhancement of mitophagy. Deubiquitinated by USP30.

It is found in the mitochondrion outer membrane. The protein resides in the peroxisome. The enzyme catalyses N(omega)-hydroxy-L-arginine + 2 Fe(II)-[cytochrome b5] + 2 H(+) = L-arginine + 2 Fe(III)-[cytochrome b5] + H2O. Functionally, catalyzes the reduction of N-oxygenated molecules, acting as a counterpart of cytochrome P450 and flavin-containing monooxygenases in metabolic cycles. As a component of prodrug-converting system, reduces a multitude of N-hydroxylated prodrugs particularly amidoximes, leading to increased drug bioavailability. May be involved in mitochondrial N(omega)-hydroxy-L-arginine (NOHA) reduction, regulating endogenous nitric oxide levels and biosynthesis. Postulated to cleave the N-OH bond of N-hydroxylated substrates in concert with electron transfer from NADH to cytochrome b5 reductase then to cytochrome b5, the ultimate electron donor that primes the active site for substrate reduction. The protein is Mitochondrial amidoxime reducing component 2 of Homo sapiens (Human).